The sequence spans 347 residues: Druantia protein DruD (347 aa).

Its subcellular location is the cytoplasm. Functionally, component of antiviral defense system Druantia type I, composed of DruA, DruB, DruC, DruD and DruE. Expression of Druantia in E.coli (strain MG1655) confers resistance to phage lambda, SECphi18, SECphi27 and T4. This is Druantia protein DruD from Escherichia coli (strain UMEA 4076-1).